The sequence spans 107 residues: Nucleoid-associated protein Mmar10_0436 (107 aa).

Belongs to the YbaB/EbfC family. In terms of assembly, homodimer.

The protein localises to the cytoplasm. It is found in the nucleoid. Its function is as follows. Binds to DNA and alters its conformation. May be involved in regulation of gene expression, nucleoid organization and DNA protection. This Maricaulis maris (strain MCS10) (Caulobacter maris) protein is Nucleoid-associated protein Mmar10_0436.